A 985-amino-acid chain; its full sequence is UPF0182 protein cgR_0895 (985 aa).

The next 7 membrane-spanning stretches (helical) occupy residues 19–39, 63–83, 115–135, 176–196, 215–235, 262–282, and 290–310; these read VTWI…SVGF, IVLF…AGYF, VMVL…QRSW, SMML…MGGI, TQLA…YWLD, KIIL…AIFL, and LAVV…PLML. Residues 906-944 are disordered; it reads AQDIEEVDGTTTTPSTDETDTDTDQPATETPTAPVSEAE. The span at 929–939 shows a compositional bias: low complexity; the sequence is DQPATETPTAP.

This sequence belongs to the UPF0182 family.

The protein localises to the cell membrane. The chain is UPF0182 protein cgR_0895 from Corynebacterium glutamicum (strain R).